A 1495-amino-acid chain; its full sequence is Ras GTPase-activating-like protein IQG1 (1495 aa).

Residues 108 to 221 (LCRVSEVKIW…ILISMINKKW (114 aa)) enclose the Calponin-homology (CH) domain. Threonine 264 is modified (phosphothreonine). Serine 268 is subject to Phosphoserine. Residue threonine 299 is modified to Phosphothreonine. IQ domains lie at 447–467 (EQDILRFQACLRGNKFRVLSS), 538–567 (SHYPLTKLQSYMRASYVRKKVMSLNTKLND), 568–597 (ERESIMKFSAIIRGNVVRCSEDAILSAVHD), 599–628 (HKENISKLQSLIRGIFTRSCLASIIYSLGK), 629–658 (ENCNIIQLSACIRGNAVRHKVQSLFAPENN), 687–716 (EYNNLALFQAFSRGALVRESLDQKSSFYKR), and 717–746 (NVRSVIMIQSWIRKSLQRSAYLELLDCPNP). Residues 759–798 (NGTATIEEVQNQLESCQASLDSENMKKERLLKSIRQQLNI) are a coiled coil. Residues 876-1100 (SYFTRFVCEM…PHIKDVLYNV (225 aa)) form the Ras-GAP domain.

In terms of assembly, interacts with AFR1. Interacts with AKR1. Interacts with activated CDC42. Interacts with calmodulin CMD1. Interacts with myosin MYO1 and its light chain MLC1. Interacts with BUD4. Interacts with INN1. Interacts with SEC3. Interacts with TEM1.

The protein resides in the bud neck. Its function is as follows. Required for the assembly and the contraction of the actomyosin ring at the bud neck during cytokinesis. Seems to be involved in additional tasks during cell division like axial bud-site selection and targeted secretion by recruiting the spatial landmark BUD4, the septin CDC12 and the secretion landmark SEC3 to the bud neck. May be regulated by calcium ions. The sequence is that of Ras GTPase-activating-like protein IQG1 (IQG1) from Saccharomyces cerevisiae (strain ATCC 204508 / S288c) (Baker's yeast).